The primary structure comprises 431 residues: Glutamate--tRNA ligase 1 (431 aa).

The short motif at 6–16 is the 'HIGH' region element; it reads PSPTGDMHIGN. The short motif at 235-239 is the 'KMSKS' region element; it reads KMSKR. Lys-238 provides a ligand contact to ATP.

It belongs to the class-I aminoacyl-tRNA synthetase family. Glutamate--tRNA ligase type 1 subfamily. In terms of assembly, monomer.

It is found in the cytoplasm. The catalysed reaction is tRNA(Glu) + L-glutamate + ATP = L-glutamyl-tRNA(Glu) + AMP + diphosphate. In terms of biological role, catalyzes the attachment of glutamate to tRNA(Glu) in a two-step reaction: glutamate is first activated by ATP to form Glu-AMP and then transferred to the acceptor end of tRNA(Glu). The sequence is that of Glutamate--tRNA ligase 1 from Nitratiruptor sp. (strain SB155-2).